We begin with the raw amino-acid sequence, 233 residues long: Large ribosomal subunit protein uL1 (233 aa).

The protein belongs to the universal ribosomal protein uL1 family. Part of the 50S ribosomal subunit.

Binds directly to 23S rRNA. The L1 stalk is quite mobile in the ribosome, and is involved in E site tRNA release. Its function is as follows. Protein L1 is also a translational repressor protein, it controls the translation of the L11 operon by binding to its mRNA. The protein is Large ribosomal subunit protein uL1 of Thermotoga maritima (strain ATCC 43589 / DSM 3109 / JCM 10099 / NBRC 100826 / MSB8).